Reading from the N-terminus, the 150-residue chain is MQVILLEKIQKLGDLGDLANVKAGYARNFLIPRSKVKPATKTNLAKFKLIKAELQASEAKILKNAQVIESKMTGTVCTIQANAGEEGKLFGSINTSDIQISLAASGFEVEKRNINMPETIHHTGKYEISVDLHTDITVSIKVVIEGFQEA.

This sequence belongs to the bacterial ribosomal protein bL9 family.

Binds to the 23S rRNA. This Ruthia magnifica subsp. Calyptogena magnifica protein is Large ribosomal subunit protein bL9.